The following is a 493-amino-acid chain: Amphoterin-induced protein 1 (493 aa).

Residues 1 to 27 form the signal peptide; sequence MHPHRDPRGLWLLLPSLSLLLFEVARA. In terms of domain architecture, LRRNT spans 28–61; it reads GRAVVSCPAACLCASNILSCSKQQLPNVPHSLPS. Topologically, residues 28 to 372 are extracellular; sequence GRAVVSCPAA…LHGHHDTLNT (345 aa). Cystine bridges form between C34/C40 and C38/C47. LRR repeat units lie at residues 62–83, 87–108, 111–132, 135–156, 159–179, and 186–206; these read YTAL…WTPT, QLHS…AFSP, NLRY…LFSD, VLEV…AFDD, QLQK…ELVK, and KLTL…PDLQ. A glycan (N-linked (GlcNAc...) asparagine) is linked at N72. The LRRCT domain maps to 221-272; that stretch reads NPLNCDCELYQLFSHWQYRQLSSVMDFQEDLYCMNSKKLHNVFNLSFLNCGE. 3 disulfide bridges follow: C225–C253, C227–C270, and C290–C341. Residues N264, N315, N349, and N360 are each glycosylated (N-linked (GlcNAc...) asparagine). Residues 269–353 enclose the Ig-like C2-type domain; the sequence is NCGEYKERAW…MGETFNETLS (85 aa). Residues 373 to 393 traverse the membrane as a helical segment; that stretch reads AYTTLVGCILSVVLVLIYLYL. Topologically, residues 394 to 493 are cytoplasmic; sequence TPCRCWCRGV…SVFSDTPIVV (100 aa). Residues 405-493 form a disordered region; the sequence is KPSSHQGDSL…SVFSDTPIVV (89 aa). Residues 408-424 show a composition bias toward polar residues; the sequence is SHQGDSLSSSMLSTTPN. Over residues 431 to 442 the composition is skewed to basic and acidic residues; that stretch reads GDKDDGFDRRVA. S477 and S481 each carry phosphoserine.

It belongs to the immunoglobulin superfamily. AMIGO family. In terms of assembly, homodimer, and heterodimer with AMIGO2 and AMIGO3. Interacts with KCNB1.

It is found in the cell membrane. The protein localises to the perikaryon. The protein resides in the cell projection. It localises to the dendrite. Its subcellular location is the axon. Its function is as follows. Promotes growth and fasciculation of neurites from cultured hippocampal neurons. May be involved in fasciculation as well as myelination of developing neural axons. May have a role in regeneration as well as neural plasticity in the adult nervous system. May mediate homophilic as well as heterophilic cell-cell interaction and contribute to signal transduction through its intracellular domain. Assembled with KCNB1 modulates the gating characteristics of the delayed rectifier voltage-dependent potassium channel KCNB1. The chain is Amphoterin-induced protein 1 from Homo sapiens (Human).